The following is a 446-amino-acid chain: D(1A) dopamine receptor (446 aa).

Residues 1-23 (MRTLNTSTMEGTGLVAERDFSFR) are Extracellular-facing. Asn5 is a glycosylation site (N-linked (GlcNAc...) asparagine). Residues 24–49 (ILTACFLSLLILSTLLGNTLVCAAVI) traverse the membrane as a helical segment. At 50-60 (RFRHLRSKVTN) the chain is on the cytoplasmic side. A helical membrane pass occupies residues 61–87 (FFVISLAVSDLLVAVLVMPWKAVAEIA). Over 88-96 (GFWPFGSFC) the chain is Extracellular. Cys96 and Cys186 form a disulfide bridge. The chain crosses the membrane as a helical span at residues 97 to 119 (NIWVAFDIMCSTASILNLCVISV). The Cytoplasmic portion of the chain corresponds to 120–138 (DRYWAISSPFRYERKMTPK). A helical membrane pass occupies residues 139–163 (AAFILISVAWTLSVLISFIPVQLSW). The Extracellular portion of the chain corresponds to 164–192 (HKAKPTGPSEGNATSLGKTINNCDSSLSR). Asn175 is a glycosylation site (N-linked (GlcNAc...) asparagine). A helical membrane pass occupies residues 193–218 (TYAISSSLISFYIPVAIMIVTYTRIY). Topologically, residues 219-272 (RIAQKQIRRISALERAAVHAKNCQTTTGNGNPMECSQPESSFKMSFKRETKVLK) are cytoplasmic. Residues 273 to 299 (TLSVIMGVFVCCWLPFFILNCMVPFCG) traverse the membrane as a helical segment. Residues 300 to 312 (SGETKPFCIDSIT) are Extracellular-facing. A helical transmembrane segment spans residues 313-337 (FDVFVWFGWANSSLNPIIYAFNADF). Over 338 to 446 (RKAFSTLLGC…PITQNGQHPT (109 aa)) the chain is Cytoplasmic. S-palmitoyl cysteine attachment occurs at residues Cys347 and Cys351.

The protein belongs to the G-protein coupled receptor 1 family. As to quaternary structure, interacts with DNAJC14 via its C-terminus. Interacts with DRD2. Interacts with DORIP1.

It localises to the cell membrane. The protein resides in the endoplasmic reticulum membrane. It is found in the cell projection. Its subcellular location is the cilium membrane. The protein localises to the dendrite. It localises to the dendritic spine. Its function is as follows. Dopamine receptor whose activity is mediated by G proteins which activate adenylyl cyclase. In Bos taurus (Bovine), this protein is D(1A) dopamine receptor (DRD1).